A 226-amino-acid polypeptide reads, in one-letter code: LysM and putative peptidoglycan-binding domain-containing protein 1 (226 aa).

Phosphoserine is present on residues serine 23 and serine 33. In terms of domain architecture, LysM spans 40-84 (LEHQLEPGDTLAGLALKYGVTMEQIKRTNRLYTNDSIFLKKTLYI). Residues 95–156 (NGLDSEEEND…PSHDLSASDF (62 aa)) are disordered. A compositionally biased stretch (acidic residues) spans 98–107 (DSEEENDGEE). Serine 99 carries the post-translational modification Phosphoserine. Residues 142–151 (QETSTPSHDL) are compositionally biased toward polar residues. Residues serine 165, serine 180, serine 193, and serine 211 each carry the phosphoserine modification. Positions 170–226 (AAAQKLRKGESGVPEEDTGLYPSSPRMQQRAVLGPVPLTRTSRTQTLRDQEDEIFKL) are disordered. Residues 215 to 226 (TLRDQEDEIFKL) show a composition bias toward basic and acidic residues.

This chain is LysM and putative peptidoglycan-binding domain-containing protein 1 (Lysmd1), found in Mus musculus (Mouse).